Consider the following 839-residue polypeptide: Pre-mRNA-splicing factor syf1 (839 aa).

HAT repeat units follow at residues 12-44, 46-78, 90-122, 124-158, 274-309, 377-415, 417-453, 470-502, 507-539, 541-575, 578-612, 650-684, and 686-720; these read YLIADQDTVYEQDLFRAPGSIKPWLAYIEYKQQ, GTLYEQAFVMERACKQLPRSYKLWKMYLEFRIN, AEYQKVNALFERALILLNKMPKIWEMYLSFLLQ, PLVTQTRRTFDRALRALPITQHNRIWKLYKAFARS, GNFEKARDVFEEGITTVMTVRDFTLIFDAYVEFEES, DNKEEIVNTYTAAIAAINPKKAHGKFSELWVNYAKFYES, GDLDTARVIFDKAVKVPFKSVAELADTWCEWAEMELR, APKKSTVDYFDETLSPQQRVHKSWKLWSFYVDL, ATLEETRKVYERIFELRIATPQTVVNYANLLEE, KYFEDSFKVYERGLDLFSYPVAFELWNLYLTKAVD, IGIERLRDLFEQALDGCPPKFAKPLYLMYGNLEEE, FGLTSTRPIYERAIAALPDQEAKEMCLKFADMERR, and GEIDRARAIYGHASQFCDPRTNAGFWQKWEAFEVQ. The disordered stretch occupies residues 758-839; it reads QRAQEGARER…IDLDDDMDAE (82 aa). Basic and acidic residues predominate over residues 762 to 782; that stretch reads EGAREREGEEAGTDASKERAD. The segment covering 830–839 has biased composition (acidic residues); sequence IDLDDDMDAE.

The protein belongs to the crooked-neck family. In terms of assembly, associated with the spliceosome.

It is found in the nucleus. Functionally, involved in pre-mRNA splicing and cell cycle progression. The chain is Pre-mRNA-splicing factor syf1 (syf1) from Aspergillus fumigatus (strain ATCC MYA-4609 / CBS 101355 / FGSC A1100 / Af293) (Neosartorya fumigata).